A 207-amino-acid polypeptide reads, in one-letter code: Small ribosomal subunit protein uS4 (207 aa).

Residues 33-54 (KLDSKPGQHGRTSGARTSDYGN) are disordered. Polar residues predominate over residues 42–53 (GRTSGARTSDYG). Residues 97 to 160 (SRLDNVVYRM…KKQVRIAEAL (64 aa)) form the S4 RNA-binding domain.

The protein belongs to the universal ribosomal protein uS4 family. As to quaternary structure, part of the 30S ribosomal subunit. Contacts protein S5. The interaction surface between S4 and S5 is involved in control of translational fidelity.

Its function is as follows. One of the primary rRNA binding proteins, it binds directly to 16S rRNA where it nucleates assembly of the body of the 30S subunit. With S5 and S12 plays an important role in translational accuracy. The sequence is that of Small ribosomal subunit protein uS4 from Cupriavidus necator (strain ATCC 17699 / DSM 428 / KCTC 22496 / NCIMB 10442 / H16 / Stanier 337) (Ralstonia eutropha).